The following is a 251-amino-acid chain: GTP cyclohydrolase 1 type 2 homolog (251 aa).

5 residues coordinate a divalent metal cation: His63, His64, Asp101, His219, and Glu223.

The protein belongs to the GTP cyclohydrolase I type 2/NIF3 family. As to quaternary structure, homohexamer.

In Pasteurella multocida (strain Pm70), this protein is GTP cyclohydrolase 1 type 2 homolog.